A 276-amino-acid polypeptide reads, in one-letter code: Natural cytotoxicity triggering receptor 2 (276 aa).

Positions 1-21 are cleaved as a signal peptide; it reads MAWRALHPLLLLLLLFPGSQA. Positions 22–120 constitute an Ig-like domain; the sequence is QSKAQVLQSV…IYRPSDNSVS (99 aa). Topologically, residues 22–192 are extracellular; it reads QSKAQVLQSV…LRPGPAAPIA (171 aa). 2 cysteine pairs are disulfide-bonded: C40–C109 and C55–C63. Composition is skewed to polar residues over residues 138-156 and 167-183; these read TSWTPRDLVSSQTQTQSCV and ESPSTIPVPSQPQNSTL. The interval 138 to 184 is disordered; sequence TSWTPRDLVSSQTQTQSCVPPTAGARQAPESPSTIPVPSQPQNSTLR. Residue N180 is glycosylated (N-linked (GlcNAc...) asparagine). The chain crosses the membrane as a helical span at residues 193–213; that stretch reads LVPVFCGLLVAKSLVLSALLV. Residues 214–276 lie on the Cytoplasmic side of the membrane; that stretch reads WWGDIWWKTM…ISDDDDEHTL (63 aa).

It belongs to the natural cytotoxicity receptor (NCR) family. Interacts with TYROBP/DAP12. Interacts with KMT2E isoform NKp44L. In terms of tissue distribution, selectively expressed by activated NK cells and by in vitro cultured (i.e. activated) TCRg/d lymphoid cells.

The protein localises to the cell membrane. In terms of biological role, cytotoxicity-activating receptor that may contribute to the increased efficiency of activated natural killer (NK) cells to mediate tumor cell lysis. This chain is Natural cytotoxicity triggering receptor 2 (NCR2), found in Homo sapiens (Human).